A 443-amino-acid chain; its full sequence is Aspartic protease PEP3 (443 aa).

Residues 1–36 (MQNRPRVFDSAMNLSPNMHFLSLMPGLLLLSLQVHT) form the signal peptide. Positions 37–107 (SPTPLKKTIR…NTVSKAMQAN (71 aa)) are cleaved as a propeptide — activation peptide. Positions 123–440 (YLSPVTIGGQ…DLRGPSLHVA (318 aa)) constitute a Peptidase A1 domain. Residue Asp-139 is part of the active site. Residues Asn-180 and Asn-293 are each glycosylated (N-linked (GlcNAc...) asparagine). Asp-327 is an active-site residue. A disulfide bridge connects residues Cys-363 and Cys-403. Asn-364 and Asn-388 each carry an N-linked (GlcNAc...) asparagine glycan.

This sequence belongs to the peptidase A1 family. In terms of assembly, monomer.

It is found in the secreted. In terms of biological role, secreted aspartic endopeptidase that allows assimilation of proteinaceous substrates. The scissile peptide bond is attacked by a nucleophilic water molecule activated by two aspartic residues in the active site. Shows a broad primary substrate specificity. Favors hydrophobic residues at the P1 and P1' positions. This is Aspartic protease PEP3 from Coccidioides posadasii (strain C735) (Valley fever fungus).